Here is a 224-residue protein sequence, read N- to C-terminus: Ribose-5-phosphate isomerase A (224 aa).

Substrate is bound by residues 32–35 (TGST), 85–88 (DGAD), and 98–101 (KGGG). Glutamate 107 serves as the catalytic Proton acceptor. A substrate-binding site is contributed by lysine 125.

The protein belongs to the ribose 5-phosphate isomerase family. In terms of assembly, homodimer.

The enzyme catalyses aldehydo-D-ribose 5-phosphate = D-ribulose 5-phosphate. Its pathway is carbohydrate degradation; pentose phosphate pathway; D-ribose 5-phosphate from D-ribulose 5-phosphate (non-oxidative stage): step 1/1. Functionally, catalyzes the reversible conversion of ribose-5-phosphate to ribulose 5-phosphate. The chain is Ribose-5-phosphate isomerase A from Pseudomonas putida (strain ATCC 700007 / DSM 6899 / JCM 31910 / BCRC 17059 / LMG 24140 / F1).